A 371-amino-acid chain; its full sequence is Putative glutamate--cysteine ligase 2 (371 aa).

This sequence belongs to the glutamate--cysteine ligase type 2 family. YbdK subfamily.

The enzyme catalyses L-cysteine + L-glutamate + ATP = gamma-L-glutamyl-L-cysteine + ADP + phosphate + H(+). Its function is as follows. ATP-dependent carboxylate-amine ligase which exhibits weak glutamate--cysteine ligase activity. This is Putative glutamate--cysteine ligase 2 from Cupriavidus taiwanensis (strain DSM 17343 / BCRC 17206 / CCUG 44338 / CIP 107171 / LMG 19424 / R1) (Ralstonia taiwanensis (strain LMG 19424)).